The following is a 143-amino-acid chain: Large ribosomal subunit protein eL28y (143 aa).

It belongs to the eukaryotic ribosomal protein eL28 family.

The sequence is that of Large ribosomal subunit protein eL28y (RPL28C) from Arabidopsis thaliana (Mouse-ear cress).